The sequence spans 313 residues: D-beta-D-heptose 7-phosphate kinase (313 aa).

Residue 196–199 participates in ATP binding; it reads NRAE. The active site involves D264.

The catalysed reaction is D-glycero-beta-D-manno-heptose 7-phosphate + ATP = D-glycero-beta-D-manno-heptose 1,7-bisphosphate + ADP + H(+). Its pathway is nucleotide-sugar biosynthesis; ADP-L-glycero-beta-D-manno-heptose biosynthesis; ADP-L-glycero-beta-D-manno-heptose from D-glycero-beta-D-manno-heptose 7-phosphate: step 1/4. It participates in bacterial outer membrane biogenesis; LPS core biosynthesis. Its function is as follows. Catalyzes the phosphorylation of D-glycero-D-manno-heptose 7-phosphate at the C-1 position to selectively form D-glycero-beta-D-manno-heptose-1,7-bisphosphate. In Bordetella bronchiseptica (strain ATCC BAA-588 / NCTC 13252 / RB50) (Alcaligenes bronchisepticus), this protein is D-beta-D-heptose 7-phosphate kinase (rfaE).